The following is a 138-amino-acid chain: Translation initiation factor 2 subunit beta (138 aa).

The protein belongs to the eIF-2-beta/eIF-5 family. In terms of assembly, heterotrimer composed of an alpha, a beta and a gamma chain.

In terms of biological role, eIF-2 functions in the early steps of protein synthesis by forming a ternary complex with GTP and initiator tRNA. This is Translation initiation factor 2 subunit beta from Methanococcus maripaludis (strain C5 / ATCC BAA-1333).